A 333-amino-acid chain; its full sequence is Diaminopimelate epimerase (333 aa).

The substrate site is built by Asn-24 and Asn-79. The Proton donor role is filled by Cys-88. Substrate is bound by residues Gly-89–Asn-90, Asn-176, Asn-210, and Glu-228–Arg-229. The active-site Proton acceptor is the Cys-237. A substrate-binding site is contributed by Gly-238–Thr-239.

Belongs to the diaminopimelate epimerase family. Homodimer.

The protein resides in the cytoplasm. The enzyme catalyses (2S,6S)-2,6-diaminopimelate = meso-2,6-diaminopimelate. Its pathway is amino-acid biosynthesis; L-lysine biosynthesis via DAP pathway; DL-2,6-diaminopimelate from LL-2,6-diaminopimelate: step 1/1. In terms of biological role, catalyzes the stereoinversion of LL-2,6-diaminopimelate (L,L-DAP) to meso-diaminopimelate (meso-DAP), a precursor of L-lysine and an essential component of the bacterial peptidoglycan. The polypeptide is Diaminopimelate epimerase (Clostridium acetobutylicum (strain ATCC 824 / DSM 792 / JCM 1419 / IAM 19013 / LMG 5710 / NBRC 13948 / NRRL B-527 / VKM B-1787 / 2291 / W)).